Consider the following 922-residue polypeptide: Translation initiation factor IF-2 (922 aa).

The interval 33-310 (KTASSTVQPP…SKRQKRNEYE (278 aa)) is disordered. Residues 75 to 87 (PAAKAAPKAAAKP) show a composition bias toward low complexity. Composition is skewed to pro residues over residues 88 to 98 (GPKPGPKPGPQ) and 140 to 150 (TPKPGAKPGPK). Low complexity-rich tracts occupy residues 151–169 (PGGA…GRAP) and 202–211 (PGSRPGGAKK). 2 stretches are compositionally biased toward gly residues: residues 215 to 225 (KPGGAKQGGGR) and 248 to 292 (FGGG…GRPG). The span at 296-305 (RKGRKSKRQK) shows a compositional bias: basic residues. The region spanning 418–590 (QRPPVVTVMG…VLLTADASLD (173 aa)) is the tr-type G domain. Residues 427–434 (GHVDHGKT) form a G1 region. 427–434 (GHVDHGKT) lines the GTP pocket. Residues 452-456 (GITQH) are G2. The G3 stretch occupies residues 477–480 (DTPG). Residues 477–481 (DTPGH) and 531–534 (NKID) each bind GTP. The segment at 531–534 (NKID) is G4. A G5 region spans residues 567-569 (SAK).

It belongs to the TRAFAC class translation factor GTPase superfamily. Classic translation factor GTPase family. IF-2 subfamily.

The protein resides in the cytoplasm. In terms of biological role, one of the essential components for the initiation of protein synthesis. Protects formylmethionyl-tRNA from spontaneous hydrolysis and promotes its binding to the 30S ribosomal subunits. Also involved in the hydrolysis of GTP during the formation of the 70S ribosomal complex. The polypeptide is Translation initiation factor IF-2 (Corynebacterium jeikeium (strain K411)).